Here is a 528-residue protein sequence, read N- to C-terminus: DNA primase large subunit (528 aa).

The tract at residues 210–239 (NEEHQRKQYFQQEKFIKLPFENVIELVGNR) is H-T-H-like motif. Positions 336, 417, 434, and 474 each coordinate [4Fe-4S] cluster.

It belongs to the eukaryotic-type primase large subunit family. DNA polymerase alpha:primase is a four subunit enzyme complex, which is assembled throughout the cell cycle, and consists of the two DNA polymerase subunits A POL1 and B POL12, and the DNA primase large PRI2 and small PRI1 subunits. Interacts with MCM10. [4Fe-4S] cluster is required as a cofactor.

In terms of biological role, DNA primase is the polymerase that synthesizes small RNA primers for the Okazaki fragments made during discontinuous DNA replication. In a complex with DNA polymerase alpha (DNA polymerase alpha:primase) constitutes a replicative polymerase. Both primase components participate in formation of the active center, but the ATP-binding site is exclusively located on p48. The polypeptide is DNA primase large subunit (PRI2) (Saccharomyces cerevisiae (strain ATCC 204508 / S288c) (Baker's yeast)).